Reading from the N-terminus, the 388-residue chain is tRNA (guanine(26)-N(2))-dimethyltransferase (388 aa).

The Trm1 methyltransferase domain occupies 4 to 383 (KTIVEGTTKV…APITEIKEII (380 aa)). 4 residues coordinate S-adenosyl-L-methionine: Arg-41, Arg-78, Asp-94, and Ala-123. 4 residues coordinate Zn(2+): Cys-251, Cys-254, Cys-271, and Cys-274.

This sequence belongs to the class I-like SAM-binding methyltransferase superfamily. Trm1 family.

It catalyses the reaction guanosine(26) in tRNA + 2 S-adenosyl-L-methionine = N(2)-dimethylguanosine(26) in tRNA + 2 S-adenosyl-L-homocysteine + 2 H(+). Functionally, dimethylates a single guanine residue at position 26 of a number of tRNAs using S-adenosyl-L-methionine as donor of the methyl groups. The chain is tRNA (guanine(26)-N(2))-dimethyltransferase from Methanosarcina barkeri (strain Fusaro / DSM 804).